Here is a 330-residue protein sequence, read N- to C-terminus: Putative ADP-ribosyl glycohydrolase L543 (330 aa).

This sequence belongs to the ADP-ribosylglycohydrolase family.

This chain is Putative ADP-ribosyl glycohydrolase L543, found in Acanthamoeba polyphaga mimivirus (APMV).